A 573-amino-acid polypeptide reads, in one-letter code: 3-(3-hydroxy-phenyl)propionate/3-hydroxycinnamic acid hydroxylase (573 aa).

FAD is bound by residues 18 to 47 (DVVIVGAGPVGLTLANILGLQGVRTMIVEE) and 283 to 293 (FRKGRMFLAGD).

This sequence belongs to the PheA/TfdB FAD monooxygenase family. The cofactor is FAD.

The catalysed reaction is 3-(3-hydroxyphenyl)propanoate + NADH + O2 + H(+) = 3-(2,3-dihydroxyphenyl)propanoate + NAD(+) + H2O. It carries out the reaction (2E)-3-(3-hydroxyphenyl)prop-2-enoate + NADH + O2 + H(+) = (2E)-3-(2,3-dihydroxyphenyl)prop-2-enoate + NAD(+) + H2O. Its pathway is aromatic compound metabolism; 3-phenylpropanoate degradation. Catalyzes the insertion of one atom of molecular oxygen into position 2 of the phenyl ring of 3-(3-hydroxyphenyl)propionate (3-HPP) and hydroxycinnamic acid (3HCI). The protein is 3-(3-hydroxy-phenyl)propionate/3-hydroxycinnamic acid hydroxylase of Mycobacterium sp. (strain KMS).